The sequence spans 4299 residues: DNA-dependent protein kinase catalytic subunit (4299 aa).

Positions 551-590 form a coiled coil; the sequence is KDLNSTIKKENNNNNNNKNKNNNNNQTLTKEEISKSIKKL. Disordered regions lie at residues 557 to 577, 613 to 633, 878 to 917, and 1206 to 1230; these read IKKE…NNQT, DEND…DQDN, NSSD…MKFK, and SSSK…EDGT. Composition is skewed to low complexity over residues 562 to 575, 617 to 631, 878 to 893, and 1206 to 1226; these read NNNN…NNNN, NNSN…NNDQ, NSSD…IDSG, and SSSK…NNNS. Position 2789 is a phosphoserine; by autocatalysis (S2789). Phosphothreonine; by autocatalysis is present on residues T2814 and T2822. Low complexity predominate over residues 2832–2867; it reads SSSQSYGGTNNNTGSSQLSSSSSSSGSQSSSQNNSS. 2 disordered regions span residues 2832-2881 and 3535-3559; these read SSSQ…PKLI and TTSS…SSSQ. An FAT domain is found at 3031–3707; the sequence is KIKDISLNSN…YFPFKISSEQ (677 aa). The 340-residue stretch at 3887 to 4226 folds into the PI3K/PI4K catalytic domain; sequence FDTNVLVMGS…AKKKLELVNP (340 aa). The interval 3893–3899 is G-loop; that stretch reads VMGSLRK. The interval 4092 to 4100 is catalytic loop; that stretch reads GIGDRHLEN. The interval 4112-4137 is activation loop; that stretch reads GIDFGHAFGTATQFLPIPELMPFRLT. The FATC domain maps to 4267 to 4299; sequence VCSSVKEQIDCLIDQSTDPNILSRAWVGWNGAL.

This sequence belongs to the PI3/PI4-kinase family. DNAPK subfamily. May be phosphorylated upon DNA damage. Could be autophosphorylated. Autophosphorylation induces a conformational change that leads to remodeling of the DNA-PK complex, requisite for efficient end processing and DNA repair. Post-translationally, autophosphorylated on Ser-2789, Thr-2814 and Thr-2822. Ser-2789 is a DNA damage-inducible phosphorylation site (inducible with ionizing radiation, IR).

It localises to the nucleus. Its subcellular location is the nucleolus. It catalyses the reaction L-seryl-[protein] + ATP = O-phospho-L-seryl-[protein] + ADP + H(+). The catalysed reaction is L-threonyl-[protein] + ATP = O-phospho-L-threonyl-[protein] + ADP + H(+). Its activity is regulated as follows. Inhibited by wortmannin. Activity of the enzyme seems to be attenuated by autophosphorylation. In terms of biological role, serine/threonine-protein kinase that acts as a molecular sensor for DNA damage. Is recruited to DNA ends by the Ku70/Ku80 heterodimer and is involved in DNA non-homologous end joining (NHEJ) required for double-strand break (DSB) repair and V(D)J recombination. This activity is only apparent when DNA damage is administered in G1 phase of the cell cycle. Required for efficient signaling of DNA double-stranded breaks via phosphorylation of H2AX during G1. This chain is DNA-dependent protein kinase catalytic subunit (dnapkcs), found in Dictyostelium discoideum (Social amoeba).